The sequence spans 115 residues: T cell receptor beta variable 12-5 (115 aa).

Residues Met1–Ala21 form the signal peptide. The 94-residue stretch at Arg22–Leu115 folds into the Ig-like domain. A disulfide bridge connects residues Cys42 and Cys111.

As to quaternary structure, alpha-beta TR is a heterodimer composed of an alpha and beta chain; disulfide-linked. The alpha-beta TR is associated with the transmembrane signaling CD3 coreceptor proteins to form the TR-CD3 (TcR or TCR). The assembly of alpha-beta TR heterodimers with CD3 occurs in the endoplasmic reticulum where a single alpha-beta TR heterodimer associates with one CD3D-CD3E heterodimer, one CD3G-CD3E heterodimer and one CD247 homodimer forming a stable octameric structure. CD3D-CD3E and CD3G-CD3E heterodimers preferentially associate with TR alpha and TR beta chains, respectively. The association of the CD247 homodimer is the last step of TcR assembly in the endoplasmic reticulum and is required for transport to the cell surface.

The protein localises to the cell membrane. Functionally, v region of the variable domain of T cell receptor (TR) beta chain that participates in the antigen recognition. Alpha-beta T cell receptors are antigen specific receptors which are essential to the immune response and are present on the cell surface of T lymphocytes. Recognize peptide-major histocompatibility (MH) (pMH) complexes that are displayed by antigen presenting cells (APC), a prerequisite for efficient T cell adaptive immunity against pathogens. Binding of alpha-beta TR to pMH complex initiates TR-CD3 clustering on the cell surface and intracellular activation of LCK that phosphorylates the ITAM motifs of CD3G, CD3D, CD3E and CD247 enabling the recruitment of ZAP70. In turn ZAP70 phosphorylates LAT, which recruits numerous signaling molecules to form the LAT signalosome. The LAT signalosome propagates signal branching to three major signaling pathways, the calcium, the mitogen-activated protein kinase (MAPK) kinase and the nuclear factor NF-kappa-B (NF-kB) pathways, leading to the mobilization of transcription factors that are critical for gene expression and essential for T cell growth and differentiation. The T cell repertoire is generated in the thymus, by V-(D)-J rearrangement. This repertoire is then shaped by intrathymic selection events to generate a peripheral T cell pool of self-MH restricted, non-autoaggressive T cells. Post-thymic interaction of alpha-beta TR with the pMH complexes shapes TR structural and functional avidity. This Homo sapiens (Human) protein is T cell receptor beta variable 12-5.